A 579-amino-acid chain; its full sequence is Folliculin (579 aa).

Residues Gly-32 to Cys-82 are disordered. 2 positions are modified to phosphoserine: Ser-62 and Ser-73. Low complexity predominate over residues Pro-63–Pro-76. The uDENN FLCN/SMCR8-type domain occupies Arg-86–Thr-242. Residues Gln-285–Lys-309 adopt a coiled-coil conformation. Over residues Glu-294 to Glu-308 the composition is skewed to acidic residues. Residues Glu-294 to Glu-321 form a disordered region. Phosphoserine occurs at positions 302, 406, 537, 542, and 571. Residues Gln-339–Thr-491 enclose the cDENN FLCN/SMCR8-type domain. Residues Gln-493–Ser-558 form the dDENN FLCN/SMCR8-type domain.

Belongs to the folliculin family. As to quaternary structure, interacts (via C-terminus) with FNIP1 or FNIP2 (via C-terminus). Component of the lysosomal folliculin complex (LFC), composed of FLCN, FNIP1 (or FNIP2), RagA/RRAGA or RagB/RRAGB GDP-bound, RagC/RRAGC or RagD/RRAGD GTP-bound, and Ragulator. Interaction with FNIP1 or FNIP2 mediates indirect interaction with the PRKAA1, PRKAB1 and PRKAG1 subunits of 5'-AMP-activated protein kinase (AMPK). Interacts with HSP90AA1 in the presence of FNIP1. Interacts with HSP70, STUB1, CDC37, AHSA1, CCT2, STIP1, PTGES3 and PPP5C. Interacts with GABARAP; interaction takes place in the presence of FNIP1 and/or FNIP2. Interacts with RILP; the interaction is direct and promotes association between RILP and RAB34. Interacts with KIF3A and KIF3B. Interacts with lactate dehydrogenase LDHA, but not LDHB; the interaction is direct, may preferentially bind LDHA dimers rather than tetramers, and regulates LDHA activity, acting as an uncompetitive inhibitor. Phosphorylation by ULK1 modulates the interaction with GABARAP and is required to regulate autophagy.

The protein resides in the lysosome membrane. It is found in the cytoplasm. The protein localises to the cytosol. Its subcellular location is the cell projection. It localises to the cilium. The protein resides in the cytoskeleton. It is found in the microtubule organizing center. The protein localises to the centrosome. Its subcellular location is the spindle. It localises to the nucleus. Its activity is regulated as follows. GTPase-activating activity is inhibited in the folliculin complex (LFC), which stabilizes the GDP-bound state of RagA/RRAGA (or RagB/RRAGB), because Arg-164 is located far from the RagC/RRAGC or RagD/RRAGD nucleotide pocket. Disassembly of the LFC complex upon amino acid restimulation liberates the GTPase-activating activity. Multi-functional protein, involved in both the cellular response to amino acid availability and in the regulation of glycolysis. GTPase-activating protein that plays a key role in the cellular response to amino acid availability through regulation of the non-canonical mTORC1 signaling cascade controlling the MiT/TFE factors TFEB and TFE3. Activates mTORC1 by acting as a GTPase-activating protein: specifically stimulates GTP hydrolysis by RagC/RRAGC or RagD/RRAGD, promoting the conversion to the GDP-bound state of RagC/RRAGC or RagD/RRAGD, and thereby activating the kinase activity of mTORC1. The GTPase-activating activity is inhibited during starvation and activated in presence of nutrients. Acts as a key component for non-canonical mTORC1-dependent control of the MiT/TFE factors TFEB and TFE3, while it is not involved in mTORC1-dependent phosphorylation of canonical RPS6KB1/S6K1 and EIF4EBP1/4E-BP1. In low-amino acid conditions, the lysosomal folliculin complex (LFC) is formed on the membrane of lysosomes, which inhibits the GTPase-activating activity of FLCN, inactivates mTORC1 and maximizes nuclear translocation of TFEB and TFE3. Upon amino acid restimulation, RagA/RRAGA (or RagB/RRAGB) nucleotide exchange promotes disassembly of the LFC complex and liberates the GTPase-activating activity of FLCN, leading to activation of mTORC1 and subsequent cytoplasmic retention of TFEB and TFE3. Indirectly acts as a positive regulator of Wnt signaling by promoting mTOR-dependent cytoplasmic retention of MiT/TFE factor TFE3. Required for the exit of hematopoietic stem cell from pluripotency by promoting mTOR-dependent cytoplasmic retention of TFE3, thereby increasing Wnt signaling. Involved in the control of embryonic stem cells differentiation; together with LAMTOR1 it is necessary to recruit and activate RagC/RRAGC and RagD/RRAGD at the lysosomes, and to induce exit of embryonic stem cells from pluripotency via non-canonical, mTOR-independent TFE3 inactivation. Acts as an inhibitor of browning of adipose tissue by regulating mTOR-dependent cytoplasmic retention of TFE3. In response to flow stress, regulates STK11/LKB1 accumulation and mTORC1 activation through primary cilia: may act by recruiting STK11/LKB1 to primary cilia for activation of AMPK resided at basal bodies, causing mTORC1 down-regulation. Together with FNIP1 and/or FNIP2, regulates autophagy: following phosphorylation by ULK1, interacts with GABARAP and promotes autophagy. Required for starvation-induced perinuclear clustering of lysosomes by promoting association of RILP with its effector RAB34. Regulates glycolysis by binding to lactate dehydrogenase LDHA, acting as an uncompetitive inhibitor. The sequence is that of Folliculin from Bos taurus (Bovine).